Consider the following 535-residue polypeptide: Bifunctional purine biosynthesis protein PurH (535 aa).

The MGS-like domain occupies 6 to 151 (TRLPIRRALI…KNHKDVAIVV (146 aa)).

It belongs to the PurH family.

The catalysed reaction is (6R)-10-formyltetrahydrofolate + 5-amino-1-(5-phospho-beta-D-ribosyl)imidazole-4-carboxamide = 5-formamido-1-(5-phospho-D-ribosyl)imidazole-4-carboxamide + (6S)-5,6,7,8-tetrahydrofolate. It carries out the reaction IMP + H2O = 5-formamido-1-(5-phospho-D-ribosyl)imidazole-4-carboxamide. Its pathway is purine metabolism; IMP biosynthesis via de novo pathway; 5-formamido-1-(5-phospho-D-ribosyl)imidazole-4-carboxamide from 5-amino-1-(5-phospho-D-ribosyl)imidazole-4-carboxamide (10-formyl THF route): step 1/1. The protein operates within purine metabolism; IMP biosynthesis via de novo pathway; IMP from 5-formamido-1-(5-phospho-D-ribosyl)imidazole-4-carboxamide: step 1/1. This chain is Bifunctional purine biosynthesis protein PurH, found in Pseudomonas aeruginosa (strain LESB58).